Consider the following 318-residue polypeptide: Protoheme IX farnesyltransferase (318 aa).

9 helical membrane passes run 37–57 (VMEL…RGLP), 59–79 (IWLI…AGAF), 108–128 (EALV…WFGA), 131–151 (LAGL…TLIL), 158–178 (NIVW…AAVT), 183–203 (WPAI…YWPL), 216–238 (VPML…YTWA), 249–269 (LGHA…WFLL), and 296–316 (ISYL…GMPL).

It belongs to the UbiA prenyltransferase family. Protoheme IX farnesyltransferase subfamily.

Its subcellular location is the cell membrane. It carries out the reaction heme b + (2E,6E)-farnesyl diphosphate + H2O = Fe(II)-heme o + diphosphate. Its pathway is porphyrin-containing compound metabolism; heme O biosynthesis; heme O from protoheme: step 1/1. In terms of biological role, converts heme B (protoheme IX) to heme O by substitution of the vinyl group on carbon 2 of heme B porphyrin ring with a hydroxyethyl farnesyl side group. This is Protoheme IX farnesyltransferase from Renibacterium salmoninarum (strain ATCC 33209 / DSM 20767 / JCM 11484 / NBRC 15589 / NCIMB 2235).